A 504-amino-acid chain; its full sequence is Syntaphilin (504 aa).

The interval 1–74 (MAMSLQGSRR…HGIKPPTPEQ (74 aa)) is disordered. Low complexity-rich tracts occupy residues 7–26 (GSRRASAGSRRRTSPPVSVR) and 33–49 (SLSSSSNSGSCKGSDSS). Positions 79–161 (LQQKEVCIRH…VKNNLIDKDK (83 aa)) form a coiled coil. Positions 191–244 (VAKEEGTGESAGGSPARSLTRSSTYTKLSDPAVCGDRQAGDPSNTPAEDRADSG) are disordered. Phosphoserine occurs at positions 200 and 204. Polar residues predominate over residues 207 to 217 (RSLTRSSTYTK). Threonine 214 bears the Phosphothreonine mark. Serine 219 is modified (phosphoserine). A Phosphothreonine modification is found at threonine 235. Residues 437 to 456 (YIVDLLAVVVPAVPTVAWLC) form a helical membrane-spanning segment.

As to quaternary structure, binds to STX1A. Interacts with DNM1; this interaction inhibits the binding of DNM1 to AMPH and DNM1-receptor-mediated endocytosis.

It is found in the membrane. The protein localises to the synapse. It localises to the synaptosome. In terms of biological role, inhibits SNARE complex formation by absorbing free STX1A. The chain is Syntaphilin from Rattus norvegicus (Rat).